The primary structure comprises 110 residues: MQAKATAKFVRVSPRKARLVAQNVKGKPVEDAMNILRFTPQKAGGLIFKVMHSALANAEQLPGIDVDAMVVKQVIINEGPTWKRFLPRSMGRANRILKRTSHITVILEES.

This sequence belongs to the universal ribosomal protein uL22 family. In terms of assembly, part of the 50S ribosomal subunit.

Its function is as follows. This protein binds specifically to 23S rRNA; its binding is stimulated by other ribosomal proteins, e.g. L4, L17, and L20. It is important during the early stages of 50S assembly. It makes multiple contacts with different domains of the 23S rRNA in the assembled 50S subunit and ribosome. Functionally, the globular domain of the protein is located near the polypeptide exit tunnel on the outside of the subunit, while an extended beta-hairpin is found that lines the wall of the exit tunnel in the center of the 70S ribosome. This is Large ribosomal subunit protein uL22 from Oleidesulfovibrio alaskensis (strain ATCC BAA-1058 / DSM 17464 / G20) (Desulfovibrio alaskensis).